The sequence spans 315 residues: Replication factor C small subunit (315 aa).

G43 to T50 provides a ligand contact to ATP.

It belongs to the activator 1 small subunits family. RfcS subfamily. In terms of assembly, heteromultimer composed of small subunits (RfcS) and large subunits (RfcL).

Functionally, part of the RFC clamp loader complex which loads the PCNA sliding clamp onto DNA. This Methanococcus maripaludis (strain C7 / ATCC BAA-1331) protein is Replication factor C small subunit.